The chain runs to 201 residues: Glycerol-3-phosphate acyltransferase (201 aa).

4 helical membrane-spanning segments follow: residues 4–24 (IASLVLAYLLGSVPFAVLVSL), 84–104 (EIAMVGLAVFIGHLWPVFLAF), 116–136 (VLLAVNPWLALIAAAVWLAVA), and 157–177 (AWFIEPGVYAGLTIVIALLLV).

This sequence belongs to the PlsY family. In terms of assembly, probably interacts with PlsX.

The protein resides in the cell inner membrane. It catalyses the reaction an acyl phosphate + sn-glycerol 3-phosphate = a 1-acyl-sn-glycero-3-phosphate + phosphate. Its pathway is lipid metabolism; phospholipid metabolism. Catalyzes the transfer of an acyl group from acyl-phosphate (acyl-PO(4)) to glycerol-3-phosphate (G3P) to form lysophosphatidic acid (LPA). This enzyme utilizes acyl-phosphate as fatty acyl donor, but not acyl-CoA or acyl-ACP. The sequence is that of Glycerol-3-phosphate acyltransferase from Laribacter hongkongensis (strain HLHK9).